The primary structure comprises 833 residues: Leucine--tRNA ligase (833 aa).

Positions 41-52 match the 'HIGH' region motif; it reads PYPSGAGLHVGH. The 'KMSKS' region motif lies at 610–614; sequence KMSKS. Lys-613 is a binding site for ATP.

The protein belongs to the class-I aminoacyl-tRNA synthetase family.

The protein resides in the cytoplasm. It carries out the reaction tRNA(Leu) + L-leucine + ATP = L-leucyl-tRNA(Leu) + AMP + diphosphate. This is Leucine--tRNA ligase from Streptococcus pyogenes serotype M4 (strain MGAS10750).